We begin with the raw amino-acid sequence, 55 residues long: ATP synthase F(0) complex subunit 8 (55 aa).

The helical transmembrane segment at 4-24 (LNPAPWFAILVFSWLVFLTVI) threads the bilayer. A disordered region spans residues 34 to 55 (TNEPTSQSTEKAKPEPWNWPWH).

The protein belongs to the ATPase protein 8 family. In terms of assembly, component of the ATP synthase complex composed at least of ATP5F1A/subunit alpha, ATP5F1B/subunit beta, ATP5MC1/subunit c (homooctomer), MT-ATP6/subunit a, MT-ATP8/subunit 8, ATP5ME/subunit e, ATP5MF/subunit f, ATP5MG/subunit g, ATP5MK/subunit k, ATP5MJ/subunit j, ATP5F1C/subunit gamma, ATP5F1D/subunit delta, ATP5F1E/subunit epsilon, ATP5PF/subunit F6, ATP5PB/subunit b, ATP5PD/subunit d, ATP5PO/subunit OSCP. ATP synthase complex consists of a soluble F(1) head domain (subunits alpha(3) and beta(3)) - the catalytic core - and a membrane F(0) domain - the membrane proton channel (subunits c, a, 8, e, f, g, k and j). These two domains are linked by a central stalk (subunits gamma, delta, and epsilon) rotating inside the F1 region and a stationary peripheral stalk (subunits F6, b, d, and OSCP).

Its subcellular location is the mitochondrion membrane. Subunit 8, of the mitochondrial membrane ATP synthase complex (F(1)F(0) ATP synthase or Complex V) that produces ATP from ADP in the presence of a proton gradient across the membrane which is generated by electron transport complexes of the respiratory chain. ATP synthase complex consist of a soluble F(1) head domain - the catalytic core - and a membrane F(1) domain - the membrane proton channel. These two domains are linked by a central stalk rotating inside the F(1) region and a stationary peripheral stalk. During catalysis, ATP synthesis in the catalytic domain of F(1) is coupled via a rotary mechanism of the central stalk subunits to proton translocation. In vivo, can only synthesize ATP although its ATP hydrolase activity can be activated artificially in vitro. Part of the complex F(0) domain. This is ATP synthase F(0) complex subunit 8 from Oncorhynchus mykiss (Rainbow trout).